The following is a 295-amino-acid chain: Acetaldehyde dehydrogenase (295 aa).

11–14 (SGNI) lines the NAD(+) pocket. Catalysis depends on C127, which acts as the Acyl-thioester intermediate. NAD(+)-binding positions include 158–166 (SAGPGTRAN) and N270.

The protein belongs to the acetaldehyde dehydrogenase family.

It catalyses the reaction acetaldehyde + NAD(+) + CoA = acetyl-CoA + NADH + H(+). The sequence is that of Acetaldehyde dehydrogenase (nbaJ) from Geobacillus thermodenitrificans (strain NG80-2).